The following is a 456-amino-acid chain: Alcohol acyltransferase 17 (456 aa).

Residues H166 and D382 each act as proton acceptor in the active site.

It belongs to the plant acyltransferase family. As to expression, expressed in fruit.

Functionally, involved in the biosynthesis of volatile esters which confer kiwifruit flavor. Alcohol acyl transferase that can use a wide range of alcohols as substrate to produce esters. The polypeptide is Alcohol acyltransferase 17 (Actinidia deliciosa (Kiwi)).